The following is a 122-amino-acid chain: Large ribosomal subunit protein uL14c (122 aa).

It belongs to the universal ribosomal protein uL14 family. In terms of assembly, part of the 50S ribosomal subunit.

It is found in the plastid. Its subcellular location is the chloroplast. Functionally, binds to 23S rRNA. This Arabis hirsuta (Hairy rock-cress) protein is Large ribosomal subunit protein uL14c.